The chain runs to 182 residues: Glycoprotein Q2 (182 aa).

An N-terminal signal peptide occupies residues 1–20 (MHFVAVYILTHFHAYPGVAA). 2 N-linked (GlcNAc...) asparagine; by host glycosylation sites follow: Asn74 and Asn110.

In terms of assembly, interacts with isoform gQ2. The heterodimer gQ1-gQ2 associates with the glycoprotein complex gH-gL to form a tetrameric complex. The gH/gL/gQ1/gQ2 complex binds to host TNFRSF4. In terms of processing, glycosylated by host.

The protein localises to the virion membrane. Its subcellular location is the host endoplasmic reticulum-Golgi intermediate compartment. Its function is as follows. Plays a role in virus entry by participating in host receptor binding at the cell surface. The chain is Glycoprotein Q2 from Human herpesvirus 6B (strain Z29) (HHV-6 variant B).